A 68-amino-acid chain; its full sequence is Guanine nucleotide-binding protein G(I)/G(S)/G(O) subunit gamma-5 (68 aa).

Position 2 is an N-acetylserine (Ser2). Ser2 is subject to Phosphoserine. Cys65 carries the cysteine methyl ester modification. A lipid anchor (S-geranylgeranyl cysteine) is attached at Cys65. The propeptide at Ser66 to Leu68 is removed in mature form.

It belongs to the G protein gamma family. As to quaternary structure, g proteins are composed of 3 units, alpha, beta and gamma. As to expression, expressed in a variety of tissues.

The protein localises to the cell membrane. Guanine nucleotide-binding proteins (G proteins) are involved as a modulator or transducer in various transmembrane signaling systems. The beta and gamma chains are required for the GTPase activity, for replacement of GDP by GTP, and for G protein-effector interaction. This is Guanine nucleotide-binding protein G(I)/G(S)/G(O) subunit gamma-5 (GNG5) from Bos taurus (Bovine).